A 140-amino-acid chain; its full sequence is Cysteine desulfuration protein SufE (140 aa).

Catalysis depends on Cys51, which acts as the Cysteine persulfide intermediate.

This sequence belongs to the SufE family. Homodimer. Interacts with SufS.

The protein localises to the cytoplasm. Its pathway is cofactor biosynthesis; iron-sulfur cluster biosynthesis. Functionally, participates in cysteine desulfuration mediated by SufS. Cysteine desulfuration mobilizes sulfur from L-cysteine to yield L-alanine and constitutes an essential step in sulfur metabolism for biosynthesis of a variety of sulfur-containing biomolecules. Functions as a sulfur acceptor for SufS, by mediating the direct transfer of the sulfur atom from the S-sulfanylcysteine of SufS, an intermediate product of cysteine desulfuration process. The chain is Cysteine desulfuration protein SufE from Yersinia enterocolitica serotype O:8 / biotype 1B (strain NCTC 13174 / 8081).